Here is an 86-residue protein sequence, read N- to C-terminus: Cell division topological specificity factor (86 aa).

This sequence belongs to the MinE family.

Functionally, prevents the cell division inhibition by proteins MinC and MinD at internal division sites while permitting inhibition at polar sites. This ensures cell division at the proper site by restricting the formation of a division septum at the midpoint of the long axis of the cell. This Alteromonas mediterranea (strain DSM 17117 / CIP 110805 / LMG 28347 / Deep ecotype) protein is Cell division topological specificity factor.